A 126-amino-acid chain; its full sequence is Aspartate 1-decarboxylase 1 (126 aa).

Ser25 serves as the catalytic Schiff-base intermediate with substrate; via pyruvic acid. At Ser25 the chain carries Pyruvic acid (Ser). Residue Thr57 coordinates substrate. Tyr58 acts as the Proton donor in catalysis. 73–75 (GSA) provides a ligand contact to substrate.

It belongs to the PanD family. As to quaternary structure, heterooctamer of four alpha and four beta subunits. Pyruvate is required as a cofactor. Post-translationally, is synthesized initially as an inactive proenzyme, which is activated by self-cleavage at a specific serine bond to produce a beta-subunit with a hydroxyl group at its C-terminus and an alpha-subunit with a pyruvoyl group at its N-terminus.

It localises to the cytoplasm. The catalysed reaction is L-aspartate + H(+) = beta-alanine + CO2. It participates in cofactor biosynthesis; (R)-pantothenate biosynthesis; beta-alanine from L-aspartate: step 1/1. Functionally, catalyzes the pyruvoyl-dependent decarboxylation of aspartate to produce beta-alanine. The polypeptide is Aspartate 1-decarboxylase 1 (Polaromonas sp. (strain JS666 / ATCC BAA-500)).